A 280-amino-acid polypeptide reads, in one-letter code: Ribonuclease Z (280 aa).

Zn(2+) is bound by residues histidine 61, histidine 63, aspartate 65, histidine 66, histidine 153, aspartate 176, and histidine 240. Aspartate 65 functions as the Proton acceptor in the catalytic mechanism.

The protein belongs to the RNase Z family. Homodimer. Zn(2+) is required as a cofactor.

The catalysed reaction is Endonucleolytic cleavage of RNA, removing extra 3' nucleotides from tRNA precursor, generating 3' termini of tRNAs. A 3'-hydroxy group is left at the tRNA terminus and a 5'-phosphoryl group is left at the trailer molecule.. Functionally, zinc phosphodiesterase, which displays some tRNA 3'-processing endonuclease activity. Probably involved in tRNA maturation, by removing a 3'-trailer from precursor tRNA. The chain is Ribonuclease Z from Mycolicibacterium paratuberculosis (strain ATCC BAA-968 / K-10) (Mycobacterium paratuberculosis).